We begin with the raw amino-acid sequence, 389 residues long: Flap endonuclease 1 (389 aa).

An N-domain region spans residues 1 to 105 (MGIKGLTALL…GELAKRKDKR (105 aa)). D34 provides a ligand contact to Mg(2+). DNA is bound at residue R71. The Mg(2+) site is built by D87, E159, E161, D180, and D182. The I-domain stretch occupies residues 123–254 (EVEKLSKRTV…KTALKLIKEH (132 aa)). E159 is a DNA binding site. G232 and D234 together coordinate DNA. Residue D234 participates in Mg(2+) binding. The interval 338-346 (SQNRLESFF) is interaction with PCNA. The disordered stretch occupies residues 356–389 (IGKRKVEETKSGKGSKAGLNKKSKGVSGYKSKKT). Residues 374–389 (LNKKSKGVSGYKSKKT) show a composition bias toward basic residues.

This sequence belongs to the XPG/RAD2 endonuclease family. FEN1 subfamily. In terms of assembly, interacts with PCNA. Three molecules of FEN1 bind to one PCNA trimer with each molecule binding to one PCNA monomer. PCNA stimulates the nuclease activity without altering cleavage specificity. Requires Mg(2+) as cofactor. In terms of processing, phosphorylated. Phosphorylation upon DNA damage induces relocalization to the nuclear plasma.

Its subcellular location is the nucleus. The protein localises to the nucleolus. It localises to the nucleoplasm. It is found in the mitochondrion. In terms of biological role, structure-specific nuclease with 5'-flap endonuclease and 5'-3' exonuclease activities involved in DNA replication and repair. During DNA replication, cleaves the 5'-overhanging flap structure that is generated by displacement synthesis when DNA polymerase encounters the 5'-end of a downstream Okazaki fragment. It enters the flap from the 5'-end and then tracks to cleave the flap base, leaving a nick for ligation. Also involved in the long patch base excision repair (LP-BER) pathway, by cleaving within the apurinic/apyrimidinic (AP) site-terminated flap. Acts as a genome stabilization factor that prevents flaps from equilibrating into structures that lead to duplications and deletions. Also possesses 5'-3' exonuclease activity on nicked or gapped double-stranded DNA, and exhibits RNase H activity. Also involved in replication and repair of rDNA and in repairing mitochondrial DNA. This Ostreococcus tauri protein is Flap endonuclease 1.